Consider the following 110-residue polypeptide: Large ribosomal subunit protein uL22 (110 aa).

The protein belongs to the universal ribosomal protein uL22 family. As to quaternary structure, part of the 50S ribosomal subunit.

Functionally, this protein binds specifically to 23S rRNA; its binding is stimulated by other ribosomal proteins, e.g. L4, L17, and L20. It is important during the early stages of 50S assembly. It makes multiple contacts with different domains of the 23S rRNA in the assembled 50S subunit and ribosome. The globular domain of the protein is located near the polypeptide exit tunnel on the outside of the subunit, while an extended beta-hairpin is found that lines the wall of the exit tunnel in the center of the 70S ribosome. This chain is Large ribosomal subunit protein uL22, found in Dichelobacter nodosus (strain VCS1703A).